The primary structure comprises 115 residues: Arsenic resistance transcriptional regulator ArsR2 (115 aa).

An HTH arsR-type domain is found at 1-90; the sequence is MITPPDVFKS…EMLQVTLQAN (90 aa). Residues C30 and C32 each coordinate arsenite. The H-T-H motif DNA-binding region spans 31 to 54; sequence VCELMCALNDSQPKISRHLAQLRS.

In terms of assembly, homodimer.

The protein localises to the cytoplasm. In terms of biological role, binds arsenite and regulates the expression of arsenic efflux pumps. In vitro, also binds antimony and bismuth, but not arsenate. This chain is Arsenic resistance transcriptional regulator ArsR2, found in Pseudomonas putida (strain ATCC 47054 / DSM 6125 / CFBP 8728 / NCIMB 11950 / KT2440).